We begin with the raw amino-acid sequence, 144 residues long: MAYKHILIAVDLSPESKVLVEKAVSMARPYNAKVSLIHVDVNYSDLYTGLIDVNLGDMQKRISEETHHALTELSTNAGYPITETLSGSGDLGQVLVDAIKKYDMDLVVCGHHQDFWSKLMSSARQLINTVHVDMLIVPLRDEEE.

The protein belongs to the universal stress protein A family. In terms of assembly, homodimer.

The protein resides in the cytoplasm. In terms of biological role, required for resistance to DNA-damaging agents. This Escherichia coli O6:H1 (strain CFT073 / ATCC 700928 / UPEC) protein is Universal stress protein A (uspA).